Reading from the N-terminus, the 442-residue chain is Ribosome biogenesis protein NOP53 (442 aa).

The interval 242 to 264 is disordered; the sequence is KPSSNTNLKKIEDKTPRQAQKSV.

Belongs to the NOP53 family.

The protein localises to the nucleus. The protein resides in the nucleolus. It localises to the nucleoplasm. Its function is as follows. May play a role in ribosome biogenesis. In Arabidopsis thaliana (Mouse-ear cress), this protein is Ribosome biogenesis protein NOP53.